Consider the following 561-residue polypeptide: MASDIEIAQKATLRRITQVASDKLGIADEHLEPYGHYKAKLSLDYVDSLKDRPNGKLILVTAISPTPAGEGKTTTTVGLGDALNRIGKKTLVCLREPSLGPVFGMKGGAAGGGHAQVVPMEDINLHFTGDFNAIQLANNLLAAMIDNHIHHGNELDIDVRRITWKRVLDMNDRALRDITCSLGGPGNGYPREDGFDIVVASEVMAIFCLATSIQDLKERLGNIVVGYTRQQKPVTARDLKAHGAMTVLLKDALKPNLVQTLENNPAILHGGPFANIAHGCNSVIATQTSLKLADYVVTEAGFGADLGAEKFIDIKCRKSGLRPDAVVLVATIRALKFHGGVDVKELNTENLDALEKGIANIERHVANIREHYGLPCVVSINNFTFDTPAELKLLQDRMAKHEVPVIVARHWAEGGKGAEDVARAVVEIVEKGQSGAAGFKFVYDESLPLMDKITAIATKIYGAAKVNASAKVAGEIKKLQDAGYGHYPVCVAKTQYSFSTNPSARGAPSGHTIDIREVRLAAGAEFIVMICGDVMTMPGLPKVPSAEKIDLGDDGKVVGLF.

66–73 is an ATP binding site; that stretch reads TPAGEGKT.

The protein belongs to the formate--tetrahydrofolate ligase family.

It carries out the reaction (6S)-5,6,7,8-tetrahydrofolate + formate + ATP = (6R)-10-formyltetrahydrofolate + ADP + phosphate. It participates in one-carbon metabolism; tetrahydrofolate interconversion. This Methylibium petroleiphilum (strain ATCC BAA-1232 / LMG 22953 / PM1) protein is Formate--tetrahydrofolate ligase.